An 803-amino-acid chain; its full sequence is 3',5'-cyclic-AMP phosphodiesterase 4D (803 aa).

The interval 1 to 103 (MEAEGSSVPA…SGASRVRHRG (103 aa)) is disordered. Phosphoserine is present on residues His52 and His56. The segment covering 58–85 (PPPPPPSPQPQLQPPPPPPLPPPPPPPG) has biased composition (pro residues). Residues Ser137, Ser294, Ser296, Ser343, and Ser370 each carry the phosphoserine modification. Positions 338–358 (EVEIPSPTQKEKEKKKRPMSQ) are disordered. One can recognise a PDEase domain in the interval 381-710 (VKTEQEDVLA…EWYQSTIPQS (330 aa)). Lys382 participates in a covalent cross-link: Glycyl lysine isopeptide (Lys-Gly) (interchain with G-Cter in SUMO). His457 functions as the Proton donor in the catalytic mechanism. His457 serves as a coordination point for 3',5'-cyclic AMP. His457 serves as a coordination point for AMP. 4 residues coordinate Zn(2+): His461, His497, Asp498, and Asp615. AMP contacts are provided by Asp498, Asp615, Asn618, Gln666, and Phe669. Residue Asp498 participates in Mg(2+) binding. Asp498 provides a ligand contact to Mn(2+). Residues Gln666 and Phe669 each contribute to the 3',5'-cyclic AMP site. 2 disordered regions span residues 705–724 (STIPQSPSPAPDDQEDGRQG) and 732–803 (ELTL…CPDT). Positions 757–768 (CSDSKTLCTQDS) are enriched in polar residues. The segment covering 774 to 789 (PLDEQVEEEAVAEEES) has biased composition (acidic residues).

It belongs to the cyclic nucleotide phosphodiesterase family. PDE4 subfamily. As to quaternary structure, homodimer for the long isoforms. Isoforms with truncated N-termini are monomeric. Binds ARRB2. Isoform 33 is part of a ternary complex containing PRKAR2A, PRKAR2B and AKAP9. Identified in a complex composed of RYR1, PDE4D, PKA, FKBP1A and protein phosphatase 1 (PP1). Interacts with PDE4DIP. Isoform 5 interacts (via N-terminal region) with SHANK2 (via proline-rich region); the interaction is increased in a PKA-dependent manner. Isoform 33, isoform 4, isoform 7, isoform 8 and isoform 9 but not isoform 32 and isoform 6 interact with SHANK2. Isoform 31 interacts weakly with SHANK2. Zn(2+) serves as cofactor. Mg(2+) is required as a cofactor. It depends on Mn(2+) as a cofactor. Isoform 1 and isoform 9 are rapidly activated by PKA through phosphorylation. Long isoforms that share a conserved PKA phosphorylation site in the N-terminus are also activated. Post-translationally, sumoylation of long isoforms by PIAS4 augments their activation by PKA phosphorylation and represses their inhibition by ERK phosphorylation. Expressed in epithelial cells. Isoform 33, isoform 4, isoform 5 and isoform 9 are expressed in brain. Isoform 33, isoform 5, isoform 8 and isoform 9 are expressed in heart (at protein level). Isoform 4 and isoform 6 are strongly expressed in cortex and cerebellum. Isoform 7 is strongly expressed in cortex and testis; weakly expressed in kidney, lung, spleen and cerebellum. Isoform 8 is strongly expressed in lung, heart and liver. Isoform 31, isoform 32, isoform 33, isoform 5 and isoform 9 are widely distributed.

The protein localises to the apical cell membrane. It localises to the cytoplasm. The protein resides in the membrane. It is found in the cytoskeleton. Its subcellular location is the microtubule organizing center. The protein localises to the centrosome. It catalyses the reaction 3',5'-cyclic AMP + H2O = AMP + H(+). It functions in the pathway purine metabolism; 3',5'-cyclic AMP degradation; AMP from 3',5'-cyclic AMP: step 1/1. Its activity is regulated as follows. Activated by phosphatidic acid. Inhibited by rolipram. Hydrolyzes the second messenger cAMP, which is a key regulator of many important physiological processes. The protein is 3',5'-cyclic-AMP phosphodiesterase 4D (Pde4d) of Rattus norvegicus (Rat).